The chain runs to 614 residues: UvrABC system protein C (614 aa).

In terms of domain architecture, GIY-YIG spans 12–91 (ESPGVYLMKG…IKKHRPRYNL (80 aa)). The 36-residue stretch at 201-236 (RDLLKTYRERMASAAANERYEEAARYRDLIRAIEVT) folds into the UVR domain.

This sequence belongs to the UvrC family. As to quaternary structure, interacts with UvrB in an incision complex.

It localises to the cytoplasm. In terms of biological role, the UvrABC repair system catalyzes the recognition and processing of DNA lesions. UvrC both incises the 5' and 3' sides of the lesion. The N-terminal half is responsible for the 3' incision and the C-terminal half is responsible for the 5' incision. This is UvrABC system protein C from Geobacter metallireducens (strain ATCC 53774 / DSM 7210 / GS-15).